Here is a 293-residue protein sequence, read N- to C-terminus: Ribosomal protein L11 methyltransferase (293 aa).

S-adenosyl-L-methionine-binding residues include T145, G166, D188, and N230.

Belongs to the methyltransferase superfamily. PrmA family.

Its subcellular location is the cytoplasm. It carries out the reaction L-lysyl-[protein] + 3 S-adenosyl-L-methionine = N(6),N(6),N(6)-trimethyl-L-lysyl-[protein] + 3 S-adenosyl-L-homocysteine + 3 H(+). Its function is as follows. Methylates ribosomal protein L11. In Salmonella heidelberg (strain SL476), this protein is Ribosomal protein L11 methyltransferase.